The sequence spans 290 residues: Acetylglutamate kinase (290 aa).

Residues 65–66 (GG), Arg87, and Asn186 contribute to the substrate site.

This sequence belongs to the acetylglutamate kinase family. ArgB subfamily.

It is found in the cytoplasm. The enzyme catalyses N-acetyl-L-glutamate + ATP = N-acetyl-L-glutamyl 5-phosphate + ADP. The protein operates within amino-acid biosynthesis; L-arginine biosynthesis; N(2)-acetyl-L-ornithine from L-glutamate: step 2/4. Its function is as follows. Catalyzes the ATP-dependent phosphorylation of N-acetyl-L-glutamate. The polypeptide is Acetylglutamate kinase (Mycobacterium sp. (strain JLS)).